We begin with the raw amino-acid sequence, 284 residues long: NAD kinase (284 aa).

Residue aspartate 60 is the Proton acceptor of the active site. NAD(+) contacts are provided by residues 60-61 (DG), 134-135 (NE), arginine 145, lysine 162, aspartate 164, 175-180 (TAYSFS), and glutamine 234.

This sequence belongs to the NAD kinase family. The cofactor is a divalent metal cation.

It is found in the cytoplasm. The enzyme catalyses NAD(+) + ATP = ADP + NADP(+) + H(+). Its function is as follows. Involved in the regulation of the intracellular balance of NAD and NADP, and is a key enzyme in the biosynthesis of NADP. Catalyzes specifically the phosphorylation on 2'-hydroxyl of the adenosine moiety of NAD to yield NADP. The polypeptide is NAD kinase (Clostridium botulinum (strain Eklund 17B / Type B)).